Consider the following 544-residue polypeptide: Glucans biosynthesis protein G 1 (544 aa).

The N-terminal stretch at 1-33 (MVSLLRCQSFKPSSIICSLALSAAFALSGTAFA) is a signal peptide. A disordered region spans residues 36–58 (SKPAENKPATPVVSPPKATAPSA).

This sequence belongs to the OpgD/OpgG family.

Its subcellular location is the periplasm. The protein operates within glycan metabolism; osmoregulated periplasmic glucan (OPG) biosynthesis. Its function is as follows. Involved in the biosynthesis of osmoregulated periplasmic glucans (OPGs). This Shewanella oneidensis (strain ATCC 700550 / JCM 31522 / CIP 106686 / LMG 19005 / NCIMB 14063 / MR-1) protein is Glucans biosynthesis protein G 1 (opgG1).